The following is an 831-amino-acid chain: Replication restart protein PriA (831 aa).

Positions 304-471 (VLPLQGYHQV…HRHQNDPQRH (168 aa)) constitute a Helicase ATP-binding domain. 317 to 324 (GVTGSGKT) is a binding site for ATP. Positions 413–416 (DEEH) match the DEAH box motif. Residues Cys-537, Cys-540, Cys-546, Cys-549, Cys-568, Cys-571, Cys-581, and Cys-584 each contribute to the Zn(2+) site. The Helicase C-terminal domain occupies 575-735 (EIQPKVCPEC…ELPQREMLNY (161 aa)).

It belongs to the helicase family. PriA subfamily. Component of the replication restart primosome. Requires Zn(2+) as cofactor.

It catalyses the reaction Couples ATP hydrolysis with the unwinding of duplex DNA by translocating in the 3'-5' direction.. It carries out the reaction ATP + H2O = ADP + phosphate + H(+). Its function is as follows. Initiates the restart of stalled replication forks, which reloads the replicative helicase on sites other than the origin of replication. Recognizes and binds to abandoned replication forks and remodels them to uncover a helicase loading site. Promotes assembly of the primosome at these replication forks. This chain is Replication restart protein PriA, found in Synechocystis sp. (strain ATCC 27184 / PCC 6803 / Kazusa).